Consider the following 706-residue polypeptide: Methionine--tRNA ligase (706 aa).

Residues 13 to 23 carry the 'HIGH' region motif; the sequence is PYANGNFHIGH. Zn(2+)-binding residues include C144, C147, C157, and C160. A 'KMSKS' region motif is present at residues 341–345; it reads KMSKS. An ATP-binding site is contributed by K344. The tRNA-binding domain occupies 600-706; the sequence is DFAKIDLRIA…PGATPGMRVR (107 aa).

It belongs to the class-I aminoacyl-tRNA synthetase family. MetG type 1 subfamily. In terms of assembly, homodimer. The cofactor is Zn(2+).

It is found in the cytoplasm. The catalysed reaction is tRNA(Met) + L-methionine + ATP = L-methionyl-tRNA(Met) + AMP + diphosphate. Functionally, is required not only for elongation of protein synthesis but also for the initiation of all mRNA translation through initiator tRNA(fMet) aminoacylation. The polypeptide is Methionine--tRNA ligase (Paracidovorax citrulli (strain AAC00-1) (Acidovorax citrulli)).